Reading from the N-terminus, the 60-residue chain is Ferredoxin (60 aa).

4Fe-4S ferredoxin-type domains follow at residues 2 to 30 (VTID…EIQG) and 31 to 60 (DKVV…TVKE). [4Fe-4S] cluster-binding residues include Cys9, Cys14, Cys17, Cys21, Cys41, Cys44, Cys47, and Cys51.

[4Fe-4S] cluster serves as cofactor.

Functionally, ferredoxins are iron-sulfur proteins that transfer electrons probably in the CO-dehydrogenase complex. This Methanothermococcus thermolithotrophicus (Methanococcus thermolithotrophicus) protein is Ferredoxin.